The primary structure comprises 726 residues: MQQTTKLFLGALKYSIPHLGKCMPKQNYCNVADPYYNRLRLKNYRLTKCLQNKPKISELARNIPSRSFSVKDKLEKPESLQKRGINICMDAFEKVRTRLETQPQEEYEIVNAEIKHGGFVYYQEGCCLVRSKDEEADSDNYEVLFNLEELKLEQPFIDCIRVAPDEKYVAAKIRAEDSETSTCIVVKLSDQPAMEASFPNVSSFEWVKDEEDEDVLFYTFQRNLRCHDVYRATFGDNKRNERFYTEKDPSYFVFLYLTKDSRFLTLNIMNKTTSEVWLIDGLSPWDPPMLIQKRIHGMLYYVEHRDDELYILTNVGEPTEFKLMRTAADAPAIMNWDLFFTMKRNTKVVDLDMFKDHCVLFLKHSNLLYVNVIGLADDSVRSLKLPPWACGFIMDTNSDPKNCPFQLCSPIRPPKYYTYKFAEGKLFEETGHEDPITKTSRVLRIEAKSKDGKLVPMTVFHKTDSEDLQRKPLLVHVYGAYGMDLKMNFRPERRVLVDDGWILAYCHVRGGGELGLQWHADGRLTKKLNGLADLEACIKTLHSQGFSQPSLTTLSAFSAGGVLVGALCNSKPELLRAVTLEAPFLDVLNTMMDTTLPLTLEELEEWGNPSSDEKHKNYIKRYCPCQNMKPQHYPSVHITAYENDERVPLKGIVNYTEKLKEAVAEHSKGAGEGYQPPNIVLDIQPGGNHVIEDSHKKITTQMKFLYDELGLDSTDAFEALKKYLKV.

S138 bears the Phosphoserine mark. Catalysis depends on charge relay system residues S558, D644, and H689.

Belongs to the peptidase S9A family. Homodimer. Interacts with the AP-1 complex.

It is found in the cytoplasm. The protein resides in the cytosol. The protein localises to the golgi apparatus. It localises to the trans-Golgi network. Its subcellular location is the cytoskeleton. It is found in the nucleus. Its function is as follows. Serine peptidase whose precise substrate specificity remains unclear. Does not cleave peptides after a arginine or lysine residue. Regulates trans-Golgi network morphology and sorting by regulating the membrane binding of the AP-1 complex. May play a role in the regulation of synaptic vesicle exocytosis. This Rattus norvegicus (Rat) protein is Prolyl endopeptidase-like (Prepl).